Reading from the N-terminus, the 91-residue chain is Potassium channel toxin TdiKIK (91 aa).

The signal sequence occupies residues 1–25 (MVATNRCCVFALLVALLLIHSLAEA). Positions 26 to 44 (GKGKEVLGKIKNKLVEVKE) are excised as a propeptide. The BetaSPN-type CS-alpha/beta domain occupies 58–91 (EYACPVIDKFCEDHCAAKNAIGKCDDFKCQCLNS). Cystine bridges form between Cys61-Cys81, Cys68-Cys86, and Cys72-Cys88.

As to expression, expressed by the venom gland.

Its subcellular location is the secreted. The full peptide presents antibacterial and cytotoxic activities. The synthetic C-terminus (AA 33-76) inhibits voltage-gated potassium channels Kv1.1/KCNA1, Kv1.2/KCNA2, and Kv1.3/KCNA3. The polypeptide is Potassium channel toxin TdiKIK (Tityus discrepans (Venezuelan scorpion)).